The sequence spans 362 residues: G-protein coupled receptor homolog US27 (362 aa).

The Virion surface segment spans residues 1–34; sequence MTTSTNNQTLTQVSNMTNHTLNSTEIYQLFEYTR. N7, N15, N18, and N22 each carry an N-linked (GlcNAc...) asparagine; by host glycan. A helical membrane pass occupies residues 35-58; it reads LGVWLMCIVGTFLNVLVITTILYY. Residues 59–67 lie on the Intravirion side of the membrane; it reads RRKKKSPSD. A helical transmembrane segment spans residues 68-90; sequence TYICNLAVADLLIVVGLPFFLEY. The Virion surface portion of the chain corresponds to 91 to 104; sequence AKHHPKLSREVVCS. The chain crosses the membrane as a helical span at residues 105–126; that stretch reads GLNACFYICLFAGVCFLINLSM. At 127 to 148 the chain is on the intravirion side; the sequence is DRYCVIVWGVELNRVRNNKRAT. A helical membrane pass occupies residues 149-167; sequence CWVVIFWILAVLMGMPHYL. Residues 168-193 lie on the Virion surface side of the membrane; sequence MYSHTNNECVGEFANETSGWFPVFLN. The helical transmembrane segment at 194-213 threads the bilayer; it reads TKVNICGYLAPIALMAYTYN. Residues 214-233 lie on the Intravirion side of the membrane; that stretch reads RMVRFIINYVGKWHMQTLHV. A helical membrane pass occupies residues 234 to 257; the sequence is LLVVVVSFASFWFPFNLALFLESI. The Virion surface portion of the chain corresponds to 258–274; sequence RLLAGVYNDTLQNVIIF. A helical transmembrane segment spans residues 275–298; that stretch reads CLYVGQFLAYVRACLNPGIYILVG. The Intravirion segment spans residues 299–362; sequence TQMRKDMWTT…MESGEEEFLL (64 aa). Residues 341 to 362 form a disordered region; that stretch reads TKRTHYDRKNAPMESGEEEFLL.

This sequence belongs to the G-protein coupled receptor 1 family. As to quaternary structure, heterodimer with US28. Interacts with host Gi alpha-1 subunit GNAI1; this interaction does not lead to the catalytic activation of Gi complex.

The protein resides in the virion. It is found in the host cell membrane. In terms of biological role, interacts with the host Gi complex without activating it, thereby probably interfering with the chemokine-Gi signaling. May also function as a G protein sink to sequester G protein from the cell surface via internalization. Plays an important role in spread of HCMV via the extracellular route. The chain is G-protein coupled receptor homolog US27 (US27) from Homo sapiens (Human).